Here is a 78-residue protein sequence, read N- to C-terminus: Delta-conotoxin-like CVIE (78 aa).

An N-terminal signal peptide occupies residues 1–22 (MKLTCMMIVAVLFLTAWTFVTA). A propeptide spanning residues 23 to 49 (DDSRNGLKNLFPKARHEMKNPEASKLN) is cleaved from the precursor. Disulfide bonds link Cys-54-Cys-69, Cys-61-Cys-73, and Cys-68-Cys-77. Pro-65 carries the 4-hydroxyproline modification.

The protein belongs to the conotoxin O1 superfamily. In terms of tissue distribution, expressed by the venom duct.

The protein localises to the secreted. Delta-conotoxins bind to site 6 of voltage-gated sodium channels (Nav) and inhibit the inactivation process. This Conus catus (Cat cone) protein is Delta-conotoxin-like CVIE.